Consider the following 607-residue polypeptide: Probable Ufm1-specific protease 2 (607 aa).

Active-site residues include Cys-440, Asp-564, and His-566.

It belongs to the peptidase C78 family.

Functionally, thiol protease which recognizes and hydrolyzes the peptide bond at the C-terminal Gly of UFM1, a ubiquitin-like modifier protein bound to a number of target proteins. Does not hydrolyze SUMO1 or ISG15 ubiquitin-like proteins. This Drosophila melanogaster (Fruit fly) protein is Probable Ufm1-specific protease 2.